A 208-amino-acid polypeptide reads, in one-letter code: Adenylyl-sulfate kinase 3 (208 aa).

Residue 37 to 45 (GLSGSGKST) participates in ATP binding. Substrate is bound by residues aspartate 67, arginine 70, arginine 84, asparagine 87, 110–111 (IS), and glycine 160. Catalysis depends on serine 111, which acts as the Phosphoserine intermediate.

The protein belongs to the APS kinase family. As to expression, expressed in root vasculature, root tips, leaf epidermal and guard cells, pollen grains and radicle of immature seeds.

It localises to the cytoplasm. The protein resides in the cytosol. The enzyme catalyses adenosine 5'-phosphosulfate + ATP = 3'-phosphoadenylyl sulfate + ADP + H(+). Its pathway is sulfur metabolism; hydrogen sulfide biosynthesis; sulfite from sulfate: step 2/3. Catalyzes the synthesis of activated sulfate for the sulfation of secondary metabolites, including the glucosinolates. Essential for plant reproduction and viability. This Arabidopsis thaliana (Mouse-ear cress) protein is Adenylyl-sulfate kinase 3.